A 539-amino-acid chain; its full sequence is Bifunctional purine biosynthesis protein PurH (539 aa).

The 152-residue stretch at 8–159 (FPIPDLHRVR…KNYAYTGVVT (152 aa)) folds into the MGS-like domain.

This sequence belongs to the PurH family.

It catalyses the reaction (6R)-10-formyltetrahydrofolate + 5-amino-1-(5-phospho-beta-D-ribosyl)imidazole-4-carboxamide = 5-formamido-1-(5-phospho-D-ribosyl)imidazole-4-carboxamide + (6S)-5,6,7,8-tetrahydrofolate. The catalysed reaction is IMP + H2O = 5-formamido-1-(5-phospho-D-ribosyl)imidazole-4-carboxamide. The protein operates within purine metabolism; IMP biosynthesis via de novo pathway; 5-formamido-1-(5-phospho-D-ribosyl)imidazole-4-carboxamide from 5-amino-1-(5-phospho-D-ribosyl)imidazole-4-carboxamide (10-formyl THF route): step 1/1. It participates in purine metabolism; IMP biosynthesis via de novo pathway; IMP from 5-formamido-1-(5-phospho-D-ribosyl)imidazole-4-carboxamide: step 1/1. In Bartonella tribocorum (strain CIP 105476 / IBS 506), this protein is Bifunctional purine biosynthesis protein PurH.